The sequence spans 880 residues: 3-isopropylmalate dehydratase large subunit gloJ (880 aa).

[4Fe-4S] cluster is bound by residues Cys-457, Cys-520, and Cys-523.

The protein belongs to the aconitase/IPM isomerase family. LeuC type 2 subfamily. [4Fe-4S] cluster serves as cofactor.

The enzyme catalyses (2R,3S)-3-isopropylmalate = (2S)-2-isopropylmalate. It participates in mycotoxin biosynthesis. Functionally, 3-isopropylmalate dehydratase large subunit; part of the gene cluster that mediates the biosynthesis of pneumocandins, lipohexapeptides of the echinocandin family that prevent fungal cell wall formation by non-competitive inhibition of beta-1,3-glucan synthase. The 10,12-dimethylmyristoyl side chain is synthesized by the reducing polyketide synthase gloL/GLPKS4. The thioesterase gloN/GLHYD exclusively interacts with gloL/GLPKS4 to maintain turnover of the polyketide side chain. The 10R,12S-dimethylmyristic acid is then transferred to the first thiolation domain of the nonribosomal peptide synthetase gloA/GLNRPS4 by the acyl-AMP ligase gloD/GLligase, followed by its acylation to L-ornithine to trigger elongation of the cyclic hexapeptide. L-ornithine, 4R-hydroxyl-L-proline (generated from L-proline by the dioxygenase gloF/GLOXY2), 3S-hydroxyl-L-homotyrosine (generated by gloG/GLHtyB, gloH/GLHtyA, gloI/GLHtyC, gloJ/GLHtyD and hydroxylated at C-3 by the dioxygenase gloM/GLOXY1), 3R-hydroxyl-L-glutamine (generated from L-glutamine probably by the dioxygenase gloE/GLOXY3) and 3S-hydroxyl-L-proline (generated from L-proline by the dioxygenase gloF/GLOXY2 to yield pneumocandin B0), or 3S-hydroxyl-4S-methyl-L-proline (generated from L-leucine by the dioxygenase gloC/GLOXY4 to yield pneumocandin A0) are sequentially added to the growing chain. The last C domain of gloA/GLNRPS4 is proposed to be responsible for cyclization by condensation to form the peptide bond between L-ornithine and 3S-hydroxyl-4S-methyl-L-proline (for pneumocandin A0) or 3S-hydroxyl-L-proline (for pneumocandin B0). Finally, the subsequent C-4 hydroxylation of 3S-hydroxyl-L-homotyrosine and L-ornithine dihydroxylation at C-4 and C-5 are performed by the cytochrome P450 monooxygenases gloP/GLP450-1 and gloO/GLP450-2, respectively. This is 3-isopropylmalate dehydratase large subunit gloJ from Glarea lozoyensis (strain ATCC 20868 / MF5171).